The chain runs to 260 residues: Adenosylcobinamide-GDP ribazoletransferase (260 aa).

The next 7 helical transmembrane spans lie at 31 to 51 (IIFF…LVNI), 55 to 75 (IFSS…VRGI), 111 to 131 (VIGV…FAFV), 140 to 160 (FLIF…LMYY), 177 to 197 (ISSW…VYFT), 202 to 222 (FIFL…LKKF), and 234 to 254 (HLGA…LLGE).

The protein belongs to the CobS family. It depends on Mg(2+) as a cofactor.

It localises to the cell inner membrane. It catalyses the reaction alpha-ribazole + adenosylcob(III)inamide-GDP = adenosylcob(III)alamin + GMP + H(+). It carries out the reaction alpha-ribazole 5'-phosphate + adenosylcob(III)inamide-GDP = adenosylcob(III)alamin 5'-phosphate + GMP + H(+). Its pathway is cofactor biosynthesis; adenosylcobalamin biosynthesis; adenosylcobalamin from cob(II)yrinate a,c-diamide: step 7/7. In terms of biological role, joins adenosylcobinamide-GDP and alpha-ribazole to generate adenosylcobalamin (Ado-cobalamin). Also synthesizes adenosylcobalamin 5'-phosphate from adenosylcobinamide-GDP and alpha-ribazole 5'-phosphate. This is Adenosylcobinamide-GDP ribazoletransferase from Thermodesulfovibrio yellowstonii (strain ATCC 51303 / DSM 11347 / YP87).